The primary structure comprises 447 residues: Phosphoglucosamine mutase (447 aa).

Ser103 acts as the Phosphoserine intermediate in catalysis. Positions 103, 242, 244, and 246 each coordinate Mg(2+). Ser103 carries the post-translational modification Phosphoserine.

It belongs to the phosphohexose mutase family. Mg(2+) is required as a cofactor. Activated by phosphorylation.

The catalysed reaction is alpha-D-glucosamine 1-phosphate = D-glucosamine 6-phosphate. Its function is as follows. Catalyzes the conversion of glucosamine-6-phosphate to glucosamine-1-phosphate. The polypeptide is Phosphoglucosamine mutase (Jannaschia sp. (strain CCS1)).